A 210-amino-acid chain; its full sequence is Probable septum site-determining protein MinC (210 aa).

It belongs to the MinC family. In terms of assembly, interacts with MinD and FtsZ.

Its function is as follows. Cell division inhibitor that blocks the formation of polar Z ring septums. Rapidly oscillates between the poles of the cell to destabilize FtsZ filaments that have formed before they mature into polar Z rings. Prevents FtsZ polymerization. This is Probable septum site-determining protein MinC from Thermotoga petrophila (strain ATCC BAA-488 / DSM 13995 / JCM 10881 / RKU-1).